Consider the following 389-residue polypeptide: Putative 8-amino-7-oxononanoate synthase (389 aa).

Arginine 22 provides a ligand contact to substrate. Glycine 109 to tyrosine 110 serves as a coordination point for pyridoxal 5'-phosphate. Histidine 134 contacts substrate. Residues serine 182, aspartate 207–histidine 210, and threonine 238–lysine 241 each bind pyridoxal 5'-phosphate. An N6-(pyridoxal phosphate)lysine modification is found at lysine 241. Residue threonine 350 participates in substrate binding.

The protein belongs to the class-II pyridoxal-phosphate-dependent aminotransferase family. BioF subfamily. In terms of assembly, homodimer. Pyridoxal 5'-phosphate is required as a cofactor.

It catalyses the reaction 6-carboxyhexanoyl-[ACP] + L-alanine + H(+) = (8S)-8-amino-7-oxononanoate + holo-[ACP] + CO2. It functions in the pathway cofactor biosynthesis; biotin biosynthesis. Catalyzes the decarboxylative condensation of pimeloyl-[acyl-carrier protein] and L-alanine to produce 8-amino-7-oxononanoate (AON), [acyl-carrier protein], and carbon dioxide. This Parvibaculum lavamentivorans (strain DS-1 / DSM 13023 / NCIMB 13966) protein is Putative 8-amino-7-oxononanoate synthase (bioF).